Consider the following 900-residue polypeptide: MADTTVDKLAKEVGKSADRLVEQFSQAGIKKSANDTVSESEKQQLLDFLKKQHGGDAAPQKMTLQRKSVSTLSVAGSGGQSKDVKVEVRKKRTFVKRDEAAEAELAAAAKAEEEAKAAAAKAEAEAKAKADAEAKQKADAEAKAKAEKAAKAKSEKQEAAPAQTADEKAAKDEADKLQAAKDEVAKAKADAEAAAATEEARRLAEENAKRWADEEKARKEAEKTGDHHVTTSTEARAAEDTADANAEKRGRRPRKPSANAGNNANSNSNAGSGRPGGKGKRGKDNRRDNRNSRNSRNARSVAPESMDQAFNKSAVVVKAEVSIGETVSVSELASKMSVKATEIIKQMMKMGSMVTINQVLDQETAQLVAEEMGHKVILTRENELEHQVLADRNGDVKVEPRAPVVTIMGHVDHGKTSLLDYIRRAKVASGEAGGITQHIGAYHVETGNGMITFLDTPGHAAFTAMRARGAKATDIVILVVAADDGVMPQTIEAIQHAKAGGVPLIVAVNKIDKPEADPERVKSELSQHGVMSEDWGGENMFVHVSAKSGEGIDELLEGILLESEVLELKAVREGMAAGVVVESKLDKGRGPVATVLVQEGTLKQGDIVLCGLEYGKVRAMKDENGKAITEAGPSIPVEILGLSGVPSAGDEATVVRDERKAREVALYRQGKFRDVKLARQQKSKLENMFANMVEGEVQELNLVLKADVQGSLEAIADSLNKLSTDEVKVNIIARGVGGLTETDATLAAASNAIMVGFNVRADAQARKVVDSESVDLRYYSIIYQLIDEVRDAMGGMLAPEFRQEIIGLAEVRDVFKSPKIGAIAGCMVTEGTIKRSAPIRVLRENVVIYEGELESLRRFKDDVSDVRNGMECGIGVKNYNDVRVGDQIEVFETVEIARTL.

Basic and acidic residues-rich tracts occupy residues 119–158 (AAKAEAEAKAKADAEAKQKADAEAKAKAEKAAKAKSEKQE), 165–191 (ADEKAAKDEADKLQAAKDEVAKAKADA), and 198–229 (EEARRLAEENAKRWADEEKARKEAEKTGDHHV). A disordered region spans residues 119-306 (AAKAEAEAKA…NARSVAPESM (188 aa)). The segment covering 257 to 272 (SANAGNNANSNSNAGS) has biased composition (low complexity). In terms of domain architecture, tr-type G spans 400 to 569 (PRAPVVTIMG…LLESEVLELK (170 aa)). Residues 409 to 416 (GHVDHGKT) are G1. 409–416 (GHVDHGKT) serves as a coordination point for GTP. The tract at residues 434-438 (GITQH) is G2. The G3 stretch occupies residues 455–458 (DTPG). Residues 455-459 (DTPGH) and 509-512 (NKID) each bind GTP. Positions 509–512 (NKID) are G4. The segment at 545 to 547 (SAK) is G5.

The protein belongs to the TRAFAC class translation factor GTPase superfamily. Classic translation factor GTPase family. IF-2 subfamily.

The protein localises to the cytoplasm. Functionally, one of the essential components for the initiation of protein synthesis. Protects formylmethionyl-tRNA from spontaneous hydrolysis and promotes its binding to the 30S ribosomal subunits. Also involved in the hydrolysis of GTP during the formation of the 70S ribosomal complex. The polypeptide is Translation initiation factor IF-2 (Shewanella piezotolerans (strain WP3 / JCM 13877)).